The following is a 322-amino-acid chain: tRNA N6-adenosine threonylcarbamoyltransferase (322 aa).

Residues His109 and His113 each contribute to the Fe cation site. Residues 131-135, Asp164, Gly177, Asp181, and Asn277 each bind substrate; that span reads LISGG. Residue Asp303 coordinates Fe cation.

Belongs to the KAE1 / TsaD family. Fe(2+) is required as a cofactor.

Its subcellular location is the cytoplasm. It catalyses the reaction L-threonylcarbamoyladenylate + adenosine(37) in tRNA = N(6)-L-threonylcarbamoyladenosine(37) in tRNA + AMP + H(+). Functionally, required for the formation of a threonylcarbamoyl group on adenosine at position 37 (t(6)A37) in tRNAs that read codons beginning with adenine. Is involved in the transfer of the threonylcarbamoyl moiety of threonylcarbamoyl-AMP (TC-AMP) to the N6 group of A37, together with TsaE and TsaB. TsaD likely plays a direct catalytic role in this reaction. The protein is tRNA N6-adenosine threonylcarbamoyltransferase of Mesomycoplasma hyopneumoniae (strain 232) (Mycoplasma hyopneumoniae).